We begin with the raw amino-acid sequence, 139 residues long: Nucleoside diphosphate kinase (139 aa).

ATP contacts are provided by lysine 10, phenylalanine 58, arginine 86, threonine 92, arginine 104, and asparagine 114. Histidine 117 (pros-phosphohistidine intermediate) is an active-site residue.

Belongs to the NDK family. In terms of assembly, homotetramer. Mg(2+) is required as a cofactor.

The protein localises to the cytoplasm. It catalyses the reaction a 2'-deoxyribonucleoside 5'-diphosphate + ATP = a 2'-deoxyribonucleoside 5'-triphosphate + ADP. The catalysed reaction is a ribonucleoside 5'-diphosphate + ATP = a ribonucleoside 5'-triphosphate + ADP. Major role in the synthesis of nucleoside triphosphates other than ATP. The ATP gamma phosphate is transferred to the NDP beta phosphate via a ping-pong mechanism, using a phosphorylated active-site intermediate. This chain is Nucleoside diphosphate kinase, found in Rhodococcus erythropolis (strain PR4 / NBRC 100887).